A 299-amino-acid polypeptide reads, in one-letter code: uncharacterized protein (299 aa).

Residues 1 to 59 (MDKIHAMQLFIKVAELESFSRAADFFALPKGSVSRQIQALEHQLGTQLLQRTTRRVKLT) enclose the HTH lysR-type domain. A DNA-binding region (H-T-H motif) is located at residues 19 to 38 (FSRAADFFALPKGSVSRQIQ).

This sequence belongs to the LysR transcriptional regulatory family.

This is an uncharacterized protein from Escherichia coli (strain K12).